A 713-amino-acid polypeptide reads, in one-letter code: Glutamine-dependent NAD(+) synthetase (713 aa).

The CN hydrolase domain occupies 4–275 (VTLATCNLNQ…IEVITATVDL (272 aa)). Glu44 acts as the Proton acceptor; for glutaminase activity in catalysis. Lys114 serves as the catalytic For glutaminase activity. Catalysis depends on Cys175, which acts as the Nucleophile; for glutaminase activity. The interval 324 to 703 (YNTPAEEIGF…QRPQLKNTVN (380 aa)) is ligase. 354 to 361 (PLSGGADS) contributes to the ATP binding site. Ser356 is a catalytic residue.

It in the C-terminal section; belongs to the NAD synthetase family.

The catalysed reaction is deamido-NAD(+) + L-glutamine + ATP + H2O = L-glutamate + AMP + diphosphate + NAD(+) + H(+). It participates in cofactor biosynthesis; NAD(+) biosynthesis; NAD(+) from deamido-NAD(+) (L-Gln route): step 1/1. In Dictyostelium discoideum (Social amoeba), this protein is Glutamine-dependent NAD(+) synthetase (nadsyn1).